Here is a 741-residue protein sequence, read N- to C-terminus: Chromosome transmission fidelity protein 18 (741 aa).

Residue 183–190 (GPPGIGKT) participates in ATP binding.

The protein belongs to the activator 1 small subunits family. CTF18 subfamily. As to quaternary structure, component of the CTF18-RFC complex, which consists of CTF18, CTF8, DCC1, RFC2, RFC3, RFC4 and RFC5. CTF18 interacts with ECO1.

It localises to the nucleus. Essential for the fidelity of chromosome transmission. Required for the DNA replication block checkpoint. Component of the RFC-like complex CTF18-RFC which is required for efficient establishment of chromosome cohesion during S-phase and may load or unload POL30/PCNA. During a clamp loading circle, the RFC:clamp complex binds to DNA and the recognition of the double-stranded/single-stranded junction stimulates ATP hydrolysis by RFC. The complex presumably provides bipartite ATP sites in which one subunit supplies a catalytic site for hydrolysis of ATP bound to the neighboring subunit. Dissociation of RFC from the clamp leaves the clamp encircling DNA. The protein is Chromosome transmission fidelity protein 18 (CTF18) of Saccharomyces cerevisiae (strain ATCC 204508 / S288c) (Baker's yeast).